Consider the following 479-residue polypeptide: Glycogen synthase (479 aa).

Lys-15 is an ADP-alpha-D-glucose binding site.

The protein belongs to the glycosyltransferase 1 family. Bacterial/plant glycogen synthase subfamily.

The enzyme catalyses [(1-&gt;4)-alpha-D-glucosyl](n) + ADP-alpha-D-glucose = [(1-&gt;4)-alpha-D-glucosyl](n+1) + ADP + H(+). It participates in glycan biosynthesis; glycogen biosynthesis. Functionally, synthesizes alpha-1,4-glucan chains using ADP-glucose. In Pectobacterium atrosepticum (strain SCRI 1043 / ATCC BAA-672) (Erwinia carotovora subsp. atroseptica), this protein is Glycogen synthase.